The sequence spans 132 residues: HLA class I histocompatibility antigen protein P5 (132 aa).

In terms of tissue distribution, expressed in lymphoid tissues; Detected in spleen as well as in B-cell lines, NK cell lines and activated lymphocytes.

This is HLA class I histocompatibility antigen protein P5 (HCP5) from Homo sapiens (Human).